A 199-amino-acid chain; its full sequence is uncharacterized protein (199 aa).

This is an uncharacterized protein from Methanocaldococcus jannaschii (strain ATCC 43067 / DSM 2661 / JAL-1 / JCM 10045 / NBRC 100440) (Methanococcus jannaschii).